Consider the following 417-residue polypeptide: Serine hydroxymethyltransferase (417 aa).

Residues Leu120 and 124 to 126 (GHL) each bind (6S)-5,6,7,8-tetrahydrofolate. The residue at position 229 (Lys229) is an N6-(pyridoxal phosphate)lysine.

This sequence belongs to the SHMT family. Homodimer. It depends on pyridoxal 5'-phosphate as a cofactor.

Its subcellular location is the cytoplasm. It carries out the reaction (6R)-5,10-methylene-5,6,7,8-tetrahydrofolate + glycine + H2O = (6S)-5,6,7,8-tetrahydrofolate + L-serine. It participates in one-carbon metabolism; tetrahydrofolate interconversion. Its pathway is amino-acid biosynthesis; glycine biosynthesis; glycine from L-serine: step 1/1. Functionally, catalyzes the reversible interconversion of serine and glycine with tetrahydrofolate (THF) serving as the one-carbon carrier. This reaction serves as the major source of one-carbon groups required for the biosynthesis of purines, thymidylate, methionine, and other important biomolecules. Also exhibits THF-independent aldolase activity toward beta-hydroxyamino acids, producing glycine and aldehydes, via a retro-aldol mechanism. In Anaeromyxobacter sp. (strain K), this protein is Serine hydroxymethyltransferase.